Here is a 194-residue protein sequence, read N- to C-terminus: Crossover junction endodeoxyribonuclease RuvC (194 aa).

Catalysis depends on residues D7, E68, and D141. Mg(2+)-binding residues include D7, E68, and D141.

Belongs to the RuvC family. Homodimer which binds Holliday junction (HJ) DNA. The HJ becomes 2-fold symmetrical on binding to RuvC with unstacked arms; it has a different conformation from HJ DNA in complex with RuvA. In the full resolvosome a probable DNA-RuvA(4)-RuvB(12)-RuvC(2) complex forms which resolves the HJ. It depends on Mg(2+) as a cofactor.

The protein localises to the cytoplasm. It catalyses the reaction Endonucleolytic cleavage at a junction such as a reciprocal single-stranded crossover between two homologous DNA duplexes (Holliday junction).. The RuvA-RuvB-RuvC complex processes Holliday junction (HJ) DNA during genetic recombination and DNA repair. Endonuclease that resolves HJ intermediates. Cleaves cruciform DNA by making single-stranded nicks across the HJ at symmetrical positions within the homologous arms, yielding a 5'-phosphate and a 3'-hydroxyl group; requires a central core of homology in the junction. The consensus cleavage sequence is 5'-(A/T)TT(C/G)-3'. Cleavage occurs on the 3'-side of the TT dinucleotide at the point of strand exchange. HJ branch migration catalyzed by RuvA-RuvB allows RuvC to scan DNA until it finds its consensus sequence, where it cleaves and resolves the cruciform DNA. This chain is Crossover junction endodeoxyribonuclease RuvC, found in Mycolicibacterium vanbaalenii (strain DSM 7251 / JCM 13017 / BCRC 16820 / KCTC 9966 / NRRL B-24157 / PYR-1) (Mycobacterium vanbaalenii).